The sequence spans 292 residues: Protein/nucleic acid deglycase HchA (292 aa).

Over residues 1–12 (MSQDVNKLSKQP) the composition is skewed to polar residues. The disordered stretch occupies residues 1 to 23 (MSQDVNKLSKQPTPDKAEDNAFF). The active-site Nucleophile is the cysteine 190.

This sequence belongs to the peptidase C56 family. HchA subfamily.

It is found in the cytoplasm. It carries out the reaction N(omega)-(1-hydroxy-2-oxopropyl)-L-arginyl-[protein] + H2O = lactate + L-arginyl-[protein] + H(+). The enzyme catalyses N(6)-(1-hydroxy-2-oxopropyl)-L-lysyl-[protein] + H2O = lactate + L-lysyl-[protein] + H(+). It catalyses the reaction S-(1-hydroxy-2-oxopropyl)-L-cysteinyl-[protein] + H2O = lactate + L-cysteinyl-[protein] + H(+). The catalysed reaction is N(omega)-(1-hydroxy-2-oxoethyl)-L-arginyl-[protein] + H2O = L-arginyl-[protein] + glycolate + H(+). It carries out the reaction N(6)-(1-hydroxy-2-oxoethyl)-L-lysyl-[protein] + H2O = glycolate + L-lysyl-[protein] + H(+). The enzyme catalyses S-(1-hydroxy-2-oxoethyl)-L-cysteinyl-[protein] + H2O = glycolate + L-cysteinyl-[protein] + H(+). It catalyses the reaction N(2)-(1-hydroxy-2-oxopropyl)-dGTP + H2O = lactate + dGTP + H(+). The catalysed reaction is N(2)-(1-hydroxy-2-oxopropyl)-GTP + H2O = lactate + GTP + H(+). It carries out the reaction N(2)-(1-hydroxy-2-oxopropyl)-GDP + H2O = lactate + GDP + H(+). The enzyme catalyses N(2)-(1-hydroxy-2-oxopropyl)-GMP + H2O = lactate + GMP + H(+). It catalyses the reaction N(2)-(1-hydroxy-2-oxoethyl)-dGTP + H2O = dGTP + glycolate + H(+). The catalysed reaction is N(2)-(1-hydroxy-2-oxoethyl)-GTP + H2O = glycolate + GTP + H(+). It carries out the reaction N(2)-(1-hydroxy-2-oxoethyl)-GDP + H2O = glycolate + GDP + H(+). The enzyme catalyses N(2)-(1-hydroxy-2-oxoethyl)-GMP + H2O = glycolate + GMP + H(+). It catalyses the reaction an N(2)-(1-hydroxy-2-oxopropyl)-guanosine in RNA + H2O = a guanosine in RNA + lactate + H(+). The catalysed reaction is an N(2)-(1-hydroxy-2-oxopropyl)-2'-deoxyguanosine in DNA + H2O = a 2'-deoxyguanosine in DNA + lactate + H(+). It carries out the reaction an N(2)-(1-hydroxy-2-oxoethyl)-guanosine in RNA + H2O = a guanosine in RNA + glycolate + H(+). The enzyme catalyses an N(2)-(1-hydroxy-2-oxoethyl)-2'-deoxyguanosine in DNA + H2O = a 2'-deoxyguanosine in DNA + glycolate + H(+). In terms of biological role, protein and nucleotide deglycase that catalyzes the deglycation of the Maillard adducts formed between amino groups of proteins or nucleotides and reactive carbonyl groups of glyoxals. Thus, functions as a protein deglycase that repairs methylglyoxal- and glyoxal-glycated proteins, and releases repaired proteins and lactate or glycolate, respectively. Deglycates cysteine, arginine and lysine residues in proteins, and thus reactivates these proteins by reversing glycation by glyoxals. Acts on early glycation intermediates (hemithioacetals and aminocarbinols), preventing the formation of Schiff bases and advanced glycation endproducts (AGE). Also functions as a nucleotide deglycase able to repair glycated guanine in the free nucleotide pool (GTP, GDP, GMP, dGTP) and in DNA and RNA. Is thus involved in a major nucleotide repair system named guanine glycation repair (GG repair), dedicated to reversing methylglyoxal and glyoxal damage via nucleotide sanitization and direct nucleic acid repair. Plays an important role in protecting cells from carbonyl stress. This chain is Protein/nucleic acid deglycase HchA, found in Staphylococcus aureus (strain MRSA252).